The chain runs to 155 residues: Microsomal glutathione S-transferase 1 (155 aa).

At D3–D9 the chain is on the lumenal side. Residues N10 to A33 form a helical membrane-spanning segment. The Cytoplasmic portion of the chain corresponds to T34–F62. A glutathione-binding site is contributed by R38. Residues K42, K55, and K60 each carry the N6-acetyllysine modification. Residues L63–S96 form a helical membrane-spanning segment. Glutathione-binding residues include R73, R74, H76, and E81. Y93 is subject to 3'-nitrotyrosine; in vitro. Residues G97–D99 are Lumenal-facing. The helical transmembrane segment at L100 to T123 threads the bilayer. Y121 is a binding site for glutathione. Over P124–P128 the chain is Cytoplasmic. The helical transmembrane segment at N129–L148 threads the bilayer. The Lumenal portion of the chain corresponds to L149–L155.

Belongs to the MAPEG family. In terms of assembly, homotrimer; The trimer binds only one molecule of glutathione. In terms of processing, in vitro, peroxynitrite induces nitration at Tyr-93 which activates the enzyme. In terms of tissue distribution, highest in the liver, followed by kidney and testis and much lower in seminal vesicles, spleen, lung and brain.

The protein localises to the endoplasmic reticulum membrane. It localises to the mitochondrion outer membrane. It carries out the reaction RX + glutathione = an S-substituted glutathione + a halide anion + H(+). Its activity is regulated as follows. In vitro, can be activated by reagents that attack Cys-50 sulfhydryl, such as N-ethylmaleimide and via nitration of Tyr-93 by peroxynitrite. Conjugation of reduced glutathione to a wide number of exogenous and endogenous hydrophobic electrophiles. This Rattus norvegicus (Rat) protein is Microsomal glutathione S-transferase 1 (Mgst1).